We begin with the raw amino-acid sequence, 404 residues long: Tryptophan synthase beta chain (404 aa).

Residue lysine 91 is modified to N6-(pyridoxal phosphate)lysine.

Belongs to the TrpB family. As to quaternary structure, tetramer of two alpha and two beta chains. The cofactor is pyridoxal 5'-phosphate.

The catalysed reaction is (1S,2R)-1-C-(indol-3-yl)glycerol 3-phosphate + L-serine = D-glyceraldehyde 3-phosphate + L-tryptophan + H2O. The protein operates within amino-acid biosynthesis; L-tryptophan biosynthesis; L-tryptophan from chorismate: step 5/5. In terms of biological role, the beta subunit is responsible for the synthesis of L-tryptophan from indole and L-serine. In Clavibacter michiganensis subsp. michiganensis (strain NCPPB 382), this protein is Tryptophan synthase beta chain.